A 1038-amino-acid polypeptide reads, in one-letter code: E3 ubiquitin-protein ligase Topors (1038 aa).

The disordered stretch occupies residues 53–96; the sequence is ESGSESGDNEAEEPVSAGPDNANAIGEPGTSASAAEENGTVERN. An RING-type zinc finger spans residues 102-141; the sequence is CAICLSRCRRKCFTDSCMHQFCFKCLCEWSKIKPECPLCK. The tract at residues 495–682 is interaction with hairy/hry; that stretch reads AAANAEVAAI…SSDSSTTNSE (188 aa). 2 disordered regions span residues 627–858 and 972–1038; these read DQLR…SSTA and GESE…LLPY. Residues 633–642 show a composition bias toward basic residues; that stretch reads RSIRSKKSRR. Residues 643-668 are compositionally biased toward low complexity; sequence SSMPARSDSGSSPSSCSSSSFHFSSS. Positions 686 to 699 are enriched in basic residues; it reads KKSRKRVANNKRSK. A compositionally biased stretch (low complexity) spans 723–744; the sequence is QQQISQKKPQRQPESSSDSPSS. The span at 792 to 801 shows a compositional bias: basic and acidic residues; that stretch reads ATLEDRKPVK. Threonine 820 bears the Phosphothreonine mark. Serine 822 carries the phosphoserine modification. The span at 841-858 shows a compositional bias: low complexity; sequence SHSNQSSQSASLASSSTA. Residues 987 to 1031 are compositionally biased toward acidic residues; it reads EEQDEEDEEDEDQEEDDQEEEKAAEEEEEEEEDDDDSDNHDENDE.

Interacts with hairy/hry, p53 and Top1. Interacts with the gypsy chromatin insulator complex, composed of Cp190, mod(mdg4) and su(Hw); interacts directly with mod(mdg4) and su(Hw). Interacts with Lam/lamin.

The protein resides in the nucleus. Its subcellular location is the chromosome. It carries out the reaction S-ubiquitinyl-[E2 ubiquitin-conjugating enzyme]-L-cysteine + [acceptor protein]-L-lysine = [E2 ubiquitin-conjugating enzyme]-L-cysteine + N(6)-ubiquitinyl-[acceptor protein]-L-lysine.. In terms of biological role, functions as a ubiquitin-protein E3 ligase. Negatively regulates the transcriptional repressor hairy/hry by promoting its ubiquitination and subsequent degradation. Also directs the nuclear organization of the gypsy chromatin insulator. Chromatin insulators are regulatory elements which establish independent domains of transcriptional activity within eukaryotic genomes. Insulators have two defining properties; they can block the communication between an enhancer and a promoter when placed between them, and can also buffer transgenes from position effect variegation (PEV). Insulators are proposed to structure the chromatin fiber into independent domains of differing transcriptional potential by promoting the formation of distinct chromatin loops. This chromatin looping may require the formation of insulator bodies, where homotypic interactions between individual subunits of the insulator complex could promote the clustering of widely spaced insulators at the nuclear periphery. Within the gypsy insulator complex, this protein may promote formation of nuclear insulator bodies by recruiting individual insulator complexes to the nuclear lamina. In Drosophila melanogaster (Fruit fly), this protein is E3 ubiquitin-protein ligase Topors (Topors).